The following is a 1325-amino-acid chain: Cyclic nucleotide-gated channel beta-1 (1325 aa).

6 disordered regions span residues 1-124, 147-198, 227-279, 340-470, 482-637, and 659-694; these read MLGW…QVAV, PQPV…SLWL, AVLD…PGDP, WEDA…LDSC, LERT…SQNS, and KEKL…PAEA. Topologically, residues 1 to 732 are cytoplasmic; that stretch reads MLGWVQRVLP…SIDPLTNLMY (732 aa). The span at 43–81 shows a compositional bias: acidic residues; sequence PQQEPEPEPEPEPEPEPEPEPEPEPEPEPEPEPVPEEAP. Residues 105–121 show a composition bias toward polar residues; it reads LQETQVADPAQPTSQAQ. Residues 370–379 show a composition bias toward basic and acidic residues; the sequence is IPRELTKIQE. 3 stretches are compositionally biased toward acidic residues: residues 380–393, 418–463, and 495–517; these read ERED…EEKE, EEKE…EEEP, and LPEE…EEKK. Residues 518–527 show a composition bias toward basic and acidic residues; it reads EEEVEKKEEG. Over residues 560 to 571 the composition is skewed to pro residues; the sequence is TLPPPERPPPSP. Positions 633–643 are calmodulin-binding CaM1; the sequence is ASQNSAIINDR. A helical membrane pass occupies residues 733–754; that stretch reads ILWLFFVVLAWNWNCWLIPVRW. The Extracellular portion of the chain corresponds to 755–763; the sequence is AFPYQRADN. A helical membrane pass occupies residues 764 to 785; sequence IHFWLLMDYLCDFIYLLDITVF. The Cytoplasmic portion of the chain corresponds to 786-800; sequence QMRLQFVKGGDIITD. A helical transmembrane segment spans residues 801-820; it reads KKEMRNNYLKSRRFKMDLLC. At 821–836 the chain is on the extracellular side; the sequence is LLPLDFLYLKLGINPL. The helical transmembrane segment at 837 to 849 threads the bilayer; that stretch reads LRLPRCLKYMAFF. Topologically, residues 850–861 are cytoplasmic; that stretch reads EFNNRLEAILSK. A helical transmembrane segment spans residues 862-884; that stretch reads AYVYRVIRTTAYLLYSLHLNSCL. An ion conduction pathway region spans residues 862–961; it reads AYVYRVIRTT…IGQMRDVVGA (100 aa). Topologically, residues 885–907 are extracellular; the sequence is YYWASAFQGIGSTHWVYDGVGNS. Helical transmembrane passes span 908–934 and 935–960; these read YIRC…LFEI and VFQL…DVVG. Residues 961–1325 are Cytoplasmic-facing; it reads AATAGQTYYR…VLEEKKEGAE (365 aa). The C-linker stretch occupies residues 964–1040; sequence AGQTYYRSCM…SIVSKVALFQ (77 aa). Positions 1038 to 1142 are cNMP-binding domain; sequence LFQGCDRQMI…LDKKDLNEIL (105 aa). Residues 1044 to 1160 are cyclic nucleotide-binding domain; that stretch reads RQMIFDMLKR…LLRKKARRML (117 aa). Glycine 1105, glutamate 1106, serine 1108, arginine 1118, and threonine 1119 together coordinate 3',5'-cyclic GMP. Residue arginine 1118 coordinates 3',5'-cyclic AMP. The tract at residues 1224–1230 is calmodulin-binding CaM2; the sequence is QQQLLEQ. Residues 1226–1250 are compositionally biased toward low complexity; it reads QLLEQAKSSQEAGGEEGSGATDQPA. Residues 1226–1325 are disordered; sequence QLLEQAKSSQ…VLEEKKEGAE (100 aa). Pro residues predominate over residues 1262 to 1279; it reads KPPGPPEPSAQSSPPPAS.

Belongs to the cyclic nucleotide-gated cation channel (TC 1.A.1.5) family. CNGB1 subfamily. In terms of tissue distribution, rod outer segments. Olfactory sensory neurons.

It localises to the cell projection. Its subcellular location is the cilium membrane. It carries out the reaction Ca(2+)(in) = Ca(2+)(out). The catalysed reaction is Na(+)(in) = Na(+)(out). The enzyme catalyses K(+)(in) = K(+)(out). It catalyses the reaction NH4(+)(in) = NH4(+)(out). It carries out the reaction Rb(+)(in) = Rb(+)(out). The catalysed reaction is Li(+)(in) = Li(+)(out). The enzyme catalyses Cs(+)(in) = Cs(+)(out). In terms of biological role, pore-forming subunit of the rod cyclic nucleotide-gated channel. Mediates rod photoresponses at dim light converting transient changes in intracellular cGMP levels into electrical signals. In the dark, cGMP levels are high and keep the channel open enabling a steady inward current carried by Na(+) and Ca(2+) ions that leads to membrane depolarization and neurotransmitter release from synaptic terminals. Upon photon absorption cGMP levels decline leading to channel closure and membrane hyperpolarization that ultimately slows neurotransmitter release and signals the presence of light, the end point of the phototransduction cascade. Pore-forming subunit of the olfactory cyclic nucleotide-gated channel. Operates in the cilia of olfactory sensory neurons where chemical stimulation of the odorant is converted to an electrical signal. Mediates odorant-induced cAMP-dependent Ca(2+) influx triggering neuron depolarization. The rise of intracellular Ca(2+) levels potentiates the olfactory response by activating Ca(2+)-dependent Cl(-) channels, but it also serves as a negative feedback signal to desensitize the channel for rapid adaptation to odorants. Conducts cGMP- and cAMP-gated ion currents, with permeability for monovalent and divalent cations. The selectivity for Ca(2+) over Na(+) increases with cGMP concentrations, whereas the selectivity among monovalent ions is independent of the cGMP levels. In Mus musculus (Mouse), this protein is Cyclic nucleotide-gated channel beta-1.